Consider the following 228-residue polypeptide: DNA-binding response regulator MtrA (228 aa).

Residues 7-120 enclose the Response regulatory domain; sequence RILVVDDDAS…ELVARVRARL (114 aa). Position 56 is a 4-aspartylphosphate (aspartate 56). The ompR/PhoB-type DNA-binding region spans 128-227; the sequence is AEMLSIADVE…VRGVGYKAGP (100 aa).

In terms of processing, phosphorylated by MtrB.

Its function is as follows. Member of the two-component regulatory system MtrA/MtrB. In Mycobacterium bovis (strain ATCC BAA-935 / AF2122/97), this protein is DNA-binding response regulator MtrA (mtrA).